The sequence spans 4037 residues: MSSTEPIAVIGSACRFPGSSDRPSKLWELLREPRDLLQKVSERRRWHPDAFYHSDPEHHGTTNVRSSYFLDEDPADFDNAFFNIQPSEAEAIDPQQRMLMETVYDSLCSAGQTIEGLRGSSTAVIVGTMCDDWSGVLYKDWETIPQYSATGMGRSIMSNRVSYFFDWHGPSMTLDTACSSSLVAVHLAIQALRTGESRVAVAAGANLLLGPGMYIAEANLHMLSPKGRSAMWDKDVDGYARGEGIASVILKPLSAAIEDGDHIECLIRATGVNQDGRTQGLTMPSATAQAALIRETYARAGLDIDKPEDRPQFFHAHGTGTPAGDPQEAEAISKAFYSQDASDSLYVGSIKTVIGHTEGTAGLASLLGTSLALQHGMVPPNMHFNELNPRIAPFYGNLQVPTTAKPWPKLLPGQPRRASVNSFVFVIYLDSWLTWPPNAGFGGTNAHAILEAYEPPSVSPSAGPLFSPLTISAATEKSLRALMSSYSEYLKANPKTSLRDFAYTLQERRSTLAFRAAIAASTSDEAAIKIDGLLDAEDARELSTKHFGIPSPRLLGVFTGQGAQWPRMGARLVEASPFVATRLDELDASLASLPESIRPEWTLKEQMLEDAATSRVAEAAVSQPLCTAVQILLVDLLSVAGVRFHAVVGHSSGEIGAAYAAGLLSASSAIRIAYLRGLYAKLANSPNGNIRGAMMAAGTSFEDASEFCQLEGFEGRIQVAAVNSASSITLSGDEDAIAEAVEIFKDEGKFARQLKVDTAYHSAHMLPCSKPYLKSLEAMTDVLGADASGEGKPAWYSSVHEGEIMKPAALNPQYWVSNMTNTVLFAPAVAAAVAQSGPFDMALELGPHPALKGPCLDTLAEALGDRIPYSGLLSRGQDDISEMSAALGSVWSNLGAGSVSFETFEKSISGDLKGRNLIADLPKYEFDHSRSFWTISRAVGAQLVAHDPPHPVLGRRCVDRETSREIQWRNILSPKEVPWLKGHRIQGGIVYPAAGFVAMAVEAMRALAGKSSINLIKIDNLFIGRAIAFNEETSTVETLFSVKVVSSSDESIQASFSCYSGAPHEPGTSMGLNAEGIVTVTLADHEADVILFVEPKDFNMTEIETDRFYDQFQRLEYEYSPPFRGMLAIKRKKGHARGTIEDQSGSDWEDQFLIHPGMLDTAFQSSSAAFSCPGDGMMWGLYIPAGIQSIVINPYFTPAGMGKQQTLPWEAIARSMHKARSTMDINIFSQDSTHTFIQVEGLELMPFTAARPEDDAVIFSRFDYKIDGPSGDIAVADDGFTAEALENAIKGERVSFYYLRRLVESITPEEKANAPRYYRHLLDWASHVVDRVKSGKNPFVQSSWQLDTEEQIKAIWDKYGDRVDVRLIESVGKHLPDVIRKGTSILEHMEGLFEFYDQGLGLDMANRHLARMVAQVGHRYPQMRVFEIGEPRKPAPMLLCCHSDSRVLGAGTGGSTRTILSYLGDMFSSYTYTDISSGFFEAAQDRFKDFESRMVYKTFDMERDPESQGFVEGSYDLVLASNCLHATDKLEEMMTNARRLLRPGGYLIALELTSNETMRVGLPMGSLPGWWVGAESGRPWGPTVTLPQWDSLLRKCGFGGIDTSTPLLHKLHVSTVFAAQAVDDRVSLLRSPLASITVLPPTDAPRLVVVGGEALATHRIAERVASLLGPRFSDIARVTSFESLDIDALPYGSTVLSLSELDEPLFKNMNPAKLDALKTLWRQAGKILWVTRGARAEEPFSSMMLGLGRAMTHEYPNISLQILDLDRLEDEEKTAQLFTAELLRLEVLKKWQHEAQGEVDFLWSIEPEVCFEGGARLIPRLYKCRPANDRYNSARRPVMTEIDPRETPILFASEGASYELQHPSPLRIPSAPPAVSKTRTVNVSHFLLQTVHMSSAGRFMLFAGADRYTGERLLGLSHTTESQPTVPTEWTFPIASEGTNPAEALSSVYGQIIAREILKMVPKGSSIVVHEPDPSLGAALLQQAEACATEVVLTTSRKGSVSSEGRFIPANLSRRLVKKALPDSTSLYVDLSHAGESSEAGKLIGKCLPGSCSTYGSGYFHGTTPELRPGSSSSQLSAIFKAACEAAFEGQCQTAIPDIVQLQDVPSLRAIGRPLTVVDCVSTATVPVNVQTVDSGMIFRADKTYFLVGMSGQVGQSLCQWMVERGARYVVLTSRHPQVHPEYVKSMEAMGATIRVLPLDITSRDSLQQCYAEMCKTMPPVAGVAQGAMVLRDSMFDGLSFENLTAVLDPKVTGTQLLDELFYDAPLDFFIVMSSLTSVVGNSGQSNYTAANMFMVALAEQRRKRGVAGSAIAISSLIGIGYVERSEDFTGDYFEKIGYRNISEQDLHQLFAEAILVGRPGCRESSEITTGLEPFYPERNAKAQFFDDIRFNHFILERHDAQNLGGKGSAVPVRVQLAEVKTRDEAAVIIKGEANSRKNDFETQKADSRTDGFLARLRRTLMISQDEAVNEKASLVEQGIDSLMAVEVRSWFLKELEVDIPVLKILGGSSITDLLNEALERVPVSVVDLKAMANTKASTPEHRKVSVPPPPSVEVKSSSPGSSSEPQSSPADSPSRPSTPLRTPMTEMEESKTLAPVVVEKPKVYPAAKEEASEMSYGQARFWFLSGYLEDKTSFNMTVMFKLTGKLQVARLESAVRTVAQRHEALRTRFFWSGEGDRRTPMQGVLSESPIQLEHVRIESEADAQKQLAKMHEYVWDLNSWEAARMVLLTVDDDVHYFMVSGHHISWDGYSFTVLFVDLDAAYCGRPLAPLGPECQYPAFAAWQRDTYAAGAMKKAIDTYYRPMIDPHAKAIPLFPFAKSPTRPLLDHFEQFEAKATLQPALVSKLKQLSRKNGATMFHLYLAALQALVFRLLPEEDDFYLGVADANRMDKSFMGSLGFFLNLLPVRFDRSQPGTKISEIIKDTRNKAYKALENSFVPWNVLLQELKIPRTNTEAPIFQLFVDYRQIARDRAQWCGCALSDEDWLNARNGYDLTLGITDNPTGESLLSLRFQKKLYSEHSTNLFLRSYVTVLESFATGVDLEVSELPRWAPSDVEATLEAGKVYRKLMTNPQGPCTQLDWPATVSHRIDEMIHEHTAQPALKDGLGNSLTYGQMRDRINMISAALIAGGAIEGSSIGVFQNPSADWICSMLAIFRIGATYVPLDLRNSIARIVSIVADVQPTVILSDRYTTTKIRQIGAVQATEIVVSDIATSVSAPDLPNKAAPDSRAVILFTSGTTGKPKGVILTHANLRAQCEGYSRMVDLPSMVSVVLQQTIYNFDVSLDQIFAALADGGCLYVVPAEKRGDPQAITEIMAEQGVTYTVATPSEYEIWFRYARDNLARCKSWGYAFGGGEHLHSGLIHEFSSLAAQHIPGLRLFNNYGPTEASLAITKGEVQHSDPGLEDHVPAGWIIPNYKVAVVDEKLQPVPFETSGEILAGGPGVASGYLGQDELTREKFIAGVRIHPLAAKSANTWYRTGDRGRLRRDGALYVDGRILGDSQVKIRGFRVELQEIEAVLLEAAKGALSHAVITARGTGEDRFLAAHVVFAPDFPQHRRQATIHHLESKLPLPPYMQPTVIVPLASIPVTSNFKLDRKAIQALPLPETDGLGENLADVEKSVAMLWKSIIPHGVRDLTPETNFFDVGGNSILLVKLKAAMSRELKVTPLLIDLMNSSTLGGMARIVRASSGARVINWEAETSVPESLRALVKQKKTLSRSKRKNENLVVVLAGATGYLGRHILARLVNAPEVSEINCLVRDEGLEAATSSLQNSPKVRLIPADLSQPDIGLSLAKFSDLSQRADIVVDCAANRSFWDGYETLRTVNLDAVKELARLCVTNGASLHFVSSGAVQAYENSAPPTDGSDGYVASKWAAETFLRRAAESLGLQVHIHRPLGSADVGAPDSTPDRKNPSTKDEIQRDLDHILLKLGKRPDFSAVTGYVDVTPVNSVVSDMVAAMIQEISSGHGGAMLRVTEHRGRLRLHIKEFGDHIGASSQLSALPTMNPLFWFADAKKAGFAQLITSQRLVMHNKEGELVTRR.

A Ketosynthase family 3 (KS3) domain is found at 4 to 436; sequence TEPIAVIGSA…IYLDSWLTWP (433 aa). Catalysis depends on for beta-ketoacyl synthase activity residues Cys-178, His-317, and His-356. The tract at residues 557 to 879 is malonyl-CoA:ACP transacylase (MAT) domain; sequence VFTGQGAQWP…SGLLSRGQDD (323 aa). The interval 950–1085 is N-terminal hotdog fold; sequence HPVLGRRCVD…GIVTVTLADH (136 aa). The interval 950–1251 is dehydratase (DH) domain; the sequence is HPVLGRRCVD…LELMPFTAAR (302 aa). In terms of domain architecture, PKS/mFAS DH spans 950 to 1253; that stretch reads HPVLGRRCVD…LMPFTAARPE (304 aa). Catalysis depends on His-983, which acts as the Proton acceptor; for dehydratase activity. A C-terminal hotdog fold region spans residues 1100 to 1253; that stretch reads MTEIETDRFY…LMPFTAARPE (154 aa). Asp-1160 (proton donor; for dehydratase activity) is an active-site residue. The tract at residues 1448–1610 is methyltransferase (MT) domain; sequence LGAGTGGSTR…IDTSTPLLHK (163 aa). The segment at 2144-2315 is ketoreductase (KR) domain; sequence TYFLVGMSGQ…GVAGSAIAIS (172 aa). Residues 2447–2522 enclose the Carrier 1 domain; the sequence is DSRTDGFLAR…DLLNEALERV (76 aa). Ser-2482 carries the post-translational modification O-(pantetheine 4'-phosphoryl)serine. Residues 2535 to 2594 form a disordered region; sequence TKASTPEHRKVSVPPPPSVEVKSSSPGSSSEPQSSPADSPSRPSTPLRTPMTEMEESKTL. A compositionally biased stretch (low complexity) spans 2553-2584; that stretch reads VEVKSSSPGSSSEPQSSPADSPSRPSTPLRTP. Residues 2614–3046 are condensation (C) domain; it reads EMSYGQARFW…TGVDLEVSEL (433 aa). Residues 3094-3495 form an adenylation (A) (KR) domain region; that stretch reads EHTAQPALKD…DGALYVDGRI (402 aa). The region spanning 3610 to 3687 is the Carrier 2 domain; the sequence is ENLADVEKSV…GMARIVRASS (78 aa). Residue Ser-3647 is modified to O-(pantetheine 4'-phosphoryl)serine. The interval 3724 to 3961 is reductase (RED) domain; the sequence is LVVVLAGATG…MVAAMIQEIS (238 aa). A disordered region spans residues 3894 to 3915; that stretch reads GSADVGAPDSTPDRKNPSTKDE. Residues 3904-3915 are compositionally biased toward basic and acidic residues; that stretch reads TPDRKNPSTKDE.

The protein in the C-terminal section; belongs to the NRP synthetase family.

The protein operates within mycotoxin biosynthesis. Its function is as follows. Hybrid PKS-NRPS synthetase; part of the gene cluster that mediates the biosynthesis of pyrrolocin, a bright yellow trans-fused decalin-containing tetramic acid with antimicrobial activity. The PKS module of prlS together with the enoylreductase prlC catalyze the formation of the polyketide unit which is then conjugated to L-serine by the condensation domain of the prlS NRPS module. Diels-Alderase gNR600 is involved in endo-selective Diels-Alder cycloaddition to form the decalin ring. Subsequent methylation is carried leads to pyrrolocin A. The methyltransferase involved in that last step has not been identified yet and is probably located outside of the prl cluster. This Fungal sp. (strain NRRL 50135) protein is Hybrid PKS-NRPS synthetase prlS.